The chain runs to 732 residues: Photosystem I P700 chlorophyll a apoprotein A2 (732 aa).

8 helical membrane-spanning segments follow: residues Ile-46–Ala-69, Leu-133–Gln-156, Leu-173–Ile-197, Met-271–Tyr-289, Leu-328–Tyr-351, Ser-367–Ile-393, Ala-415–His-437, and Phe-515–Val-533. Cys-557 and Cys-566 together coordinate [4Fe-4S] cluster. Transmembrane regions (helical) follow at residues Ala-573 to Trp-594 and Leu-641 to Ile-663. Positions 652, 660, and 668 each coordinate chlorophyll a. Trp-669 is a phylloquinone binding site. The helical transmembrane segment at Leu-705–Ala-725 threads the bilayer.

It belongs to the PsaA/PsaB family. As to quaternary structure, the PsaA/B heterodimer binds the P700 chlorophyll special pair and subsequent electron acceptors. PSI consists of a core antenna complex that captures photons, and an electron transfer chain that converts photonic excitation into a charge separation. The eukaryotic PSI reaction center is composed of at least 11 subunits. Requires P700 is a chlorophyll a/chlorophyll a' dimer, A0 is one or more chlorophyll a, A1 is one or both phylloquinones and FX is a shared 4Fe-4S iron-sulfur center. as cofactor.

Its subcellular location is the plastid. It localises to the chloroplast thylakoid membrane. The catalysed reaction is reduced [plastocyanin] + hnu + oxidized [2Fe-2S]-[ferredoxin] = oxidized [plastocyanin] + reduced [2Fe-2S]-[ferredoxin]. Its function is as follows. PsaA and PsaB bind P700, the primary electron donor of photosystem I (PSI), as well as the electron acceptors A0, A1 and FX. PSI is a plastocyanin/cytochrome c6-ferredoxin oxidoreductase, converting photonic excitation into a charge separation, which transfers an electron from the donor P700 chlorophyll pair to the spectroscopically characterized acceptors A0, A1, FX, FA and FB in turn. Oxidized P700 is reduced on the lumenal side of the thylakoid membrane by plastocyanin or cytochrome c6. The chain is Photosystem I P700 chlorophyll a apoprotein A2 from Cyanidioschyzon merolae (strain NIES-3377 / 10D) (Unicellular red alga).